The primary structure comprises 352 residues: Photosystem II D2 protein (352 aa).

Residue threonine 2 is modified to N-acetylthreonine. Threonine 2 carries the post-translational modification Phosphothreonine. The chain crosses the membrane as a helical span at residues 40 to 60 (CAYFALGGWLTGTTFVSSWYT). Histidine 117 provides a ligand contact to chlorophyll a. Residues 124-140 (GFMLRQFEIARAVQIRP) traverse the membrane as a helical segment. Glutamine 129 and asparagine 142 together coordinate pheophytin a. A helical transmembrane segment spans residues 152-165 (VFVSVFLIYPLGQS). Histidine 197 serves as a coordination point for chlorophyll a. A helical membrane pass occupies residues 207–227 (AALLCAIHGATVENTLFEDGD). Histidine 214 and phenylalanine 261 together coordinate a plastoquinone. Residue histidine 214 participates in Fe cation binding. Histidine 268 serves as a coordination point for Fe cation. Residues 278-294 (GLWMSALGVVGLALNLR) form a helical membrane-spanning segment.

Belongs to the reaction center PufL/M/PsbA/D family. PSII is composed of 1 copy each of membrane proteins PsbA, PsbB, PsbC, PsbD, PsbE, PsbF, PsbH, PsbI, PsbJ, PsbK, PsbL, PsbM, PsbT, PsbX, PsbY, PsbZ, Psb30/Ycf12, at least 3 peripheral proteins of the oxygen-evolving complex and a large number of cofactors. It forms dimeric complexes. The D1/D2 heterodimer binds P680, chlorophylls that are the primary electron donor of PSII, and subsequent electron acceptors. It shares a non-heme iron and each subunit binds pheophytin, quinone, additional chlorophylls, carotenoids and lipids. There is also a Cl(-1) ion associated with D1 and D2, which is required for oxygen evolution. The PSII complex binds additional chlorophylls, carotenoids and specific lipids. serves as cofactor.

The protein localises to the plastid. The protein resides in the chloroplast thylakoid membrane. It carries out the reaction 2 a plastoquinone + 4 hnu + 2 H2O = 2 a plastoquinol + O2. In terms of biological role, photosystem II (PSII) is a light-driven water:plastoquinone oxidoreductase that uses light energy to abstract electrons from H(2)O, generating O(2) and a proton gradient subsequently used for ATP formation. It consists of a core antenna complex that captures photons, and an electron transfer chain that converts photonic excitation into a charge separation. The D1/D2 (PsbA/PsbD) reaction center heterodimer binds P680, the primary electron donor of PSII as well as several subsequent electron acceptors. D2 is needed for assembly of a stable PSII complex. The polypeptide is Photosystem II D2 protein (Ostreococcus tauri).